The following is a 238-amino-acid chain: Uridylate kinase (238 aa).

10–13 (KFSG) provides a ligand contact to ATP. Residues 18–23 (GDSGFG) form an involved in allosteric activation by GTP region. Glycine 52 is a binding site for UMP. Residues glycine 53 and arginine 57 each coordinate ATP. UMP is bound by residues aspartate 73 and 134-141 (TGNPFFTT). ATP contacts are provided by threonine 161, tyrosine 167, and aspartate 170.

Belongs to the UMP kinase family. In terms of assembly, homohexamer.

It localises to the cytoplasm. It carries out the reaction UMP + ATP = UDP + ADP. It participates in pyrimidine metabolism; CTP biosynthesis via de novo pathway; UDP from UMP (UMPK route): step 1/1. Its activity is regulated as follows. Allosterically activated by GTP. Inhibited by UTP. Its function is as follows. Catalyzes the reversible phosphorylation of UMP to UDP. The sequence is that of Uridylate kinase from Campylobacter curvus (strain 525.92).